Consider the following 750-residue polypeptide: Penicillin-binding protein 2x (750 aa).

The helical transmembrane segment at 29-49 threads the bilayer; that stretch reads LSLLSVFVFAIFLVNFAVIIG. The active-site Acyl-ester intermediate is serine 337. PASTA domains follow at residues 632–691 and 692–750; these read QQSP…ILSD and KAEE…TLGD.

Belongs to the transpeptidase family.

Its subcellular location is the cell membrane. Its function is as follows. A transpeptidase that forms peptide cross-links between adjacent glycan strands in cell wall peptidoglycan (PG). Part of the divisome machinery that synthesizes the septal cross wall. Beta-lactams inactivate the PBPs by acylating an essential serine residue in the active site of these proteins. This Streptococcus pneumoniae serotype 4 (strain ATCC BAA-334 / TIGR4) protein is Penicillin-binding protein 2x (pbpX).